The sequence spans 345 residues: Histone H3-like centromeric protein cpar-1 (345 aa).

Residues 117 to 246 (NHSNRKPLEE…SRVTKTHNRK (130 aa)) are disordered. Over residues 122–149 (KPLEESRRREEPRDRVHESNIDITHRGD) the composition is skewed to basic and acidic residues. Residues 233 to 246 (RSGKSRVTKTHNRK) show a composition bias toward basic residues. The interval 263–340 (STDMLIQKAP…TDIQLYRRLC (78 aa)) is H3-like.

Belongs to the histone H3 family. Forms a nucleosome-like histone octamer containing two molecules each of H2A, H2B, cpar-1 and H4 assembled in one cpar-1-H4 heterotetramer and two H2A-H2B heterodimers. Post-translationally, cleaved at the onset of meiotic anaphase I, likely by separase sep-1.

The protein localises to the nucleus. Its subcellular location is the chromosome. In terms of biological role, histone H3-like variant which exclusively replaces conventional H3 in the nucleosome core of centromeric chromatin at the inner plate of the kinetochore. Required for recruitment and assembly of kinetochore proteins, mitotic progression and chromosome segregation. May serve as an epigenetic mark that propagates centromere identity through replication and cell division. Not required for chromosome segregation during meiosis. This Caenorhabditis briggsae protein is Histone H3-like centromeric protein cpar-1.